The primary structure comprises 224 residues: UPF0758 protein Csal_2972 (224 aa).

The MPN domain maps to 102-224; it reads ALTSPTLVRR…VVSFAERGWL (123 aa). Residues His-173, His-175, and Asp-186 each coordinate Zn(2+). Positions 173–186 match the JAMM motif motif; the sequence is HNHPSGVAEPSDAD.

Belongs to the UPF0758 family.

The protein is UPF0758 protein Csal_2972 of Chromohalobacter salexigens (strain ATCC BAA-138 / DSM 3043 / CIP 106854 / NCIMB 13768 / 1H11).